The chain runs to 397 residues: Elongation factor Tu (397 aa).

The 197-residue stretch at 10–206 (KPHVNIGTIG…AVDESIPDPV (197 aa)) folds into the tr-type G domain. The interval 19 to 26 (GHVDHGKT) is G1. 19 to 26 (GHVDHGKT) is a GTP binding site. Residue Thr-26 participates in Mg(2+) binding. The tract at residues 62–66 (GITIN) is G2. A G3 region spans residues 83–86 (DAPG). GTP contacts are provided by residues 83 to 87 (DAPGH) and 138 to 141 (NKSD). The segment at 138–141 (NKSD) is G4. A G5 region spans residues 176-178 (SAL).

This sequence belongs to the TRAFAC class translation factor GTPase superfamily. Classic translation factor GTPase family. EF-Tu/EF-1A subfamily. As to quaternary structure, monomer.

The protein resides in the cytoplasm. The catalysed reaction is GTP + H2O = GDP + phosphate + H(+). Its function is as follows. GTP hydrolase that promotes the GTP-dependent binding of aminoacyl-tRNA to the A-site of ribosomes during protein biosynthesis. The sequence is that of Elongation factor Tu from Mycobacteroides abscessus (strain ATCC 19977 / DSM 44196 / CCUG 20993 / CIP 104536 / JCM 13569 / NCTC 13031 / TMC 1543 / L948) (Mycobacterium abscessus).